The sequence spans 95 residues: Small ribosomal subunit protein bS6 (95 aa).

This sequence belongs to the bacterial ribosomal protein bS6 family.

In terms of biological role, binds together with bS18 to 16S ribosomal RNA. The protein is Small ribosomal subunit protein bS6 of Exiguobacterium sibiricum (strain DSM 17290 / CCUG 55495 / CIP 109462 / JCM 13490 / 255-15).